Consider the following 181-residue polypeptide: Acireductone dioxygenase (181 aa).

Positions 91, 93, 97, and 136 each coordinate Fe(2+). 4 residues coordinate Ni(2+): histidine 91, histidine 93, glutamate 97, and histidine 136.

The protein belongs to the acireductone dioxygenase (ARD) family. As to quaternary structure, monomer. Interacts with MMP14. The cofactor is Fe(2+). Ni(2+) is required as a cofactor.

Its subcellular location is the cytoplasm. The protein localises to the nucleus. It is found in the cell membrane. The catalysed reaction is 1,2-dihydroxy-5-(methylsulfanyl)pent-1-en-3-one + O2 = 4-methylsulfanyl-2-oxobutanoate + formate + 2 H(+). It carries out the reaction 1,2-dihydroxy-5-(methylsulfanyl)pent-1-en-3-one + O2 = 3-(methylsulfanyl)propanoate + CO + formate + 2 H(+). It functions in the pathway amino-acid biosynthesis; L-methionine biosynthesis via salvage pathway; L-methionine from S-methyl-5-thio-alpha-D-ribose 1-phosphate: step 5/6. Its function is as follows. Catalyzes 2 different reactions between oxygen and the acireductone 1,2-dihydroxy-3-keto-5-methylthiopentene (DHK-MTPene) depending upon the metal bound in the active site. Fe-containing acireductone dioxygenase (Fe-ARD) produces formate and 2-keto-4-methylthiobutyrate (KMTB), the alpha-ketoacid precursor of methionine in the methionine recycle pathway. Ni-containing acireductone dioxygenase (Ni-ARD) produces methylthiopropionate, carbon monoxide and formate, and does not lie on the methionine recycle pathway. The chain is Acireductone dioxygenase (adi1) from Danio rerio (Zebrafish).